A 430-amino-acid chain; its full sequence is Threonine synthase (430 aa).

Lysine 108 is subject to N6-(pyridoxal phosphate)lysine.

This sequence belongs to the threonine synthase family. The cofactor is pyridoxal 5'-phosphate.

It catalyses the reaction O-phospho-L-homoserine + H2O = L-threonine + phosphate. It functions in the pathway amino-acid biosynthesis; L-threonine biosynthesis; L-threonine from L-aspartate: step 5/5. Catalyzes the gamma-elimination of phosphate from L-phosphohomoserine and the beta-addition of water to produce L-threonine. This Buchnera aphidicola subsp. Baizongia pistaciae (strain Bp) protein is Threonine synthase (thrC).